The sequence spans 196 residues: Pyridoxal 5'-phosphate synthase subunit PdxT (196 aa).

Position 47–49 (47–49) interacts with L-glutamine; that stretch reads GES. Residue Cys-79 is the Nucleophile of the active site. Residues Arg-106 and 134-135 each bind L-glutamine; that span reads IR. Residues His-170 and Glu-172 each act as charge relay system in the active site.

The protein belongs to the glutaminase PdxT/SNO family. In the presence of PdxS, forms a dodecamer of heterodimers. Only shows activity in the heterodimer.

It catalyses the reaction aldehydo-D-ribose 5-phosphate + D-glyceraldehyde 3-phosphate + L-glutamine = pyridoxal 5'-phosphate + L-glutamate + phosphate + 3 H2O + H(+). The enzyme catalyses L-glutamine + H2O = L-glutamate + NH4(+). The protein operates within cofactor biosynthesis; pyridoxal 5'-phosphate biosynthesis. In terms of biological role, catalyzes the hydrolysis of glutamine to glutamate and ammonia as part of the biosynthesis of pyridoxal 5'-phosphate. The resulting ammonia molecule is channeled to the active site of PdxS. The protein is Pyridoxal 5'-phosphate synthase subunit PdxT of Halalkalibacterium halodurans (strain ATCC BAA-125 / DSM 18197 / FERM 7344 / JCM 9153 / C-125) (Bacillus halodurans).